Consider the following 428-residue polypeptide: GTPase Obg (428 aa).

Positions 1–158 (MFIDEVIITV…IKVKLELKLL (158 aa)) constitute an Obg domain. The 172-residue stretch at 159–330 (ADVALVGYPS…ILYKTYDMLS (172 aa)) folds into the OBG-type G domain. GTP-binding positions include 165-172 (GYPSVGKS), 190-194 (FTTLE), 212-215 (DIPG), 282-285 (NKMD), and 311-313 (SVL). The Mg(2+) site is built by S172 and T192. The 80-residue stretch at 349–428 (ELKIEKEDFE…IADVEFEYFE (80 aa)) folds into the OCT domain.

It belongs to the TRAFAC class OBG-HflX-like GTPase superfamily. OBG GTPase family. Monomer. Mg(2+) serves as cofactor.

The protein localises to the cytoplasm. Its function is as follows. An essential GTPase which binds GTP, GDP and possibly (p)ppGpp with moderate affinity, with high nucleotide exchange rates and a fairly low GTP hydrolysis rate. Plays a role in control of the cell cycle, stress response, ribosome biogenesis and in those bacteria that undergo differentiation, in morphogenesis control. This Fusobacterium nucleatum subsp. nucleatum (strain ATCC 25586 / DSM 15643 / BCRC 10681 / CIP 101130 / JCM 8532 / KCTC 2640 / LMG 13131 / VPI 4355) protein is GTPase Obg.